The primary structure comprises 416 residues: Putative UV-damage repair protein UvrX (416 aa).

Residues 12 to 196 enclose the UmuC domain; the sequence is ILCVDMKSFY…RPLSKMWGIG (185 aa). Residues Asp-16 and Asp-115 each contribute to the Mg(2+) site. The active site involves Glu-116.

This sequence belongs to the DNA polymerase type-Y family. The cofactor is Mg(2+).

This Bacillus subtilis (strain 168) protein is Putative UV-damage repair protein UvrX (uvrX).